The primary structure comprises 538 residues: Bifunctional purine biosynthesis protein PurH (538 aa).

Residues 8 to 158 form the MGS-like domain; sequence IPAPDKVQVK…KNHAYVTTLT (151 aa).

It belongs to the PurH family.

It carries out the reaction (6R)-10-formyltetrahydrofolate + 5-amino-1-(5-phospho-beta-D-ribosyl)imidazole-4-carboxamide = 5-formamido-1-(5-phospho-D-ribosyl)imidazole-4-carboxamide + (6S)-5,6,7,8-tetrahydrofolate. The enzyme catalyses IMP + H2O = 5-formamido-1-(5-phospho-D-ribosyl)imidazole-4-carboxamide. It participates in purine metabolism; IMP biosynthesis via de novo pathway; 5-formamido-1-(5-phospho-D-ribosyl)imidazole-4-carboxamide from 5-amino-1-(5-phospho-D-ribosyl)imidazole-4-carboxamide (10-formyl THF route): step 1/1. The protein operates within purine metabolism; IMP biosynthesis via de novo pathway; IMP from 5-formamido-1-(5-phospho-D-ribosyl)imidazole-4-carboxamide: step 1/1. In Rhizobium rhizogenes (strain K84 / ATCC BAA-868) (Agrobacterium radiobacter), this protein is Bifunctional purine biosynthesis protein PurH.